Here is a 177-residue protein sequence, read N- to C-terminus: Large ribosomal subunit protein uL6 (177 aa).

It belongs to the universal ribosomal protein uL6 family. Part of the 50S ribosomal subunit.

In terms of biological role, this protein binds to the 23S rRNA, and is important in its secondary structure. It is located near the subunit interface in the base of the L7/L12 stalk, and near the tRNA binding site of the peptidyltransferase center. This Leptothrix cholodnii (strain ATCC 51168 / LMG 8142 / SP-6) (Leptothrix discophora (strain SP-6)) protein is Large ribosomal subunit protein uL6.